The following is a 246-amino-acid chain: Sulfate transporter CysZ (246 aa).

4 helical membrane passes run 24 to 44 (LFVL…IGFA), 69 to 89 (IVWP…FTMV), 148 to 168 (LLVL…WILF), and 214 to 234 (LLIP…ATLF).

It belongs to the CysZ family.

The protein resides in the cell inner membrane. In terms of biological role, high affinity, high specificity proton-dependent sulfate transporter, which mediates sulfate uptake. Provides the sulfur source for the cysteine synthesis pathway. The chain is Sulfate transporter CysZ from Pseudomonas aeruginosa (strain ATCC 15692 / DSM 22644 / CIP 104116 / JCM 14847 / LMG 12228 / 1C / PRS 101 / PAO1).